The chain runs to 144 residues: Transcription antitermination protein NusB (144 aa).

Belongs to the NusB family.

Functionally, involved in transcription antitermination. Required for transcription of ribosomal RNA (rRNA) genes. Binds specifically to the boxA antiterminator sequence of the ribosomal RNA (rrn) operons. The sequence is that of Transcription antitermination protein NusB from Buchnera aphidicola subsp. Baizongia pistaciae (strain Bp).